A 446-amino-acid polypeptide reads, in one-letter code: Exodeoxyribonuclease 7 large subunit (446 aa).

This sequence belongs to the XseA family. In terms of assembly, heterooligomer composed of large and small subunits.

The protein resides in the cytoplasm. It catalyses the reaction Exonucleolytic cleavage in either 5'- to 3'- or 3'- to 5'-direction to yield nucleoside 5'-phosphates.. In terms of biological role, bidirectionally degrades single-stranded DNA into large acid-insoluble oligonucleotides, which are then degraded further into small acid-soluble oligonucleotides. In Streptococcus equi subsp. zooepidemicus (strain MGCS10565), this protein is Exodeoxyribonuclease 7 large subunit.